A 577-amino-acid chain; its full sequence is Arginine--tRNA ligase (577 aa).

Residues Pro122 to His132 carry the 'HIGH' region motif.

It belongs to the class-I aminoacyl-tRNA synthetase family. As to quaternary structure, monomer.

It is found in the cytoplasm. The catalysed reaction is tRNA(Arg) + L-arginine + ATP = L-arginyl-tRNA(Arg) + AMP + diphosphate. The protein is Arginine--tRNA ligase of Vibrio parahaemolyticus serotype O3:K6 (strain RIMD 2210633).